A 145-amino-acid polypeptide reads, in one-letter code: Large ribosomal subunit protein uL24 (145 aa).

2 disordered regions span residues 1 to 21 (MKFNPFVTSDRSKNRKRHFNA) and 122 to 145 (KAKSRQVGKEKGKYKEETIEKMQE). Residue Lys136 forms a Glycyl lysine isopeptide (Lys-Gly) (interchain with G-Cter in SUMO2) linkage. The residue at position 139 (Thr139) is a Phosphothreonine.

Belongs to the universal ribosomal protein uL24 family. Component of the large ribosomal subunit. Interacts with DHX33. Post-translationally, ufmylated by UFL1 in response to endoplasmic reticulum stress, promoting reticulophagy of endoplasmic reticulum sheets.

The protein localises to the cytoplasm. Component of the large ribosomal subunit. The ribosome is a large ribonucleoprotein complex responsible for the synthesis of proteins in the cell. The chain is Large ribosomal subunit protein uL24 (Rpl26) from Rattus norvegicus (Rat).